A 134-amino-acid chain; its full sequence is Holo-[acyl-carrier-protein] synthase (134 aa).

2 residues coordinate Mg(2+): Asp-8 and Glu-57.

Belongs to the P-Pant transferase superfamily. AcpS family. The cofactor is Mg(2+).

It localises to the cytoplasm. The enzyme catalyses apo-[ACP] + CoA = holo-[ACP] + adenosine 3',5'-bisphosphate + H(+). Its function is as follows. Transfers the 4'-phosphopantetheine moiety from coenzyme A to a Ser of acyl-carrier-protein. The sequence is that of Holo-[acyl-carrier-protein] synthase from Rhizobium rhizogenes (strain K84 / ATCC BAA-868) (Agrobacterium radiobacter).